The primary structure comprises 348 residues: GMP reductase 2 (348 aa).

NADP(+) is bound by residues 26–27 (SR), lysine 78, 129–131 (DVA), and 180–181 (IG). The K(+) site is built by glycine 181, glycine 183, and cysteine 186. Cysteine 186 (thioimidate intermediate) is an active-site residue. Threonine 188 serves as the catalytic Proton donor/acceptor. Arginine 189 contributes to the K(+) binding site. Residues 219 to 221 (DGG), 242 to 243 (GG), 268 to 270 (GMS), and 286 to 290 (RASEG) contribute to the GMP site. Residues methionine 269 and 285–286 (YR) each bind NADP(+). Lysine 291 bears the N6-acetyllysine mark. Residue 314-317 (STCT) coordinates NADP(+).

It belongs to the IMPDH/GMPR family. GuaC type 1 subfamily. Homotetramer.

It carries out the reaction IMP + NH4(+) + NADP(+) = GMP + NADPH + 2 H(+). Functionally, catalyzes the irreversible NADPH-dependent deamination of GMP to IMP. It functions in the conversion of nucleobase, nucleoside and nucleotide derivatives of G to A nucleotides, and in maintaining the intracellular balance of A and G nucleotides. Plays a role in modulating cellular differentiation. In Bos taurus (Bovine), this protein is GMP reductase 2.